A 1302-amino-acid polypeptide reads, in one-letter code: Vascular endothelial growth factor receptor kdr-like (1302 aa).

An N-terminal signal peptide occupies residues 1–28; the sequence is MTPLKTSVKAFFTLHVLFSCISHGLVEG. The Extracellular segment spans residues 29-740; the sequence is SRLPDPQLLP…GEDGKPNIEV (712 aa). 7 consecutive Ig-like C2-type domains span residues 34–115, 143–206, 222–318, 326–412, 419–542, 545–636, and 643–728; these read PQLL…HEVS, DPYF…VDNA, KNLA…TKVI, NVTH…ISYK, PKIF…FYVD, PQPF…SALT, and PWLM…AVIT. 2 cysteine pairs are disulfide-bonded: cysteine 55/cysteine 104 and cysteine 150/cysteine 199. Asparagine 69 and asparagine 97 each carry an N-linked (GlcNAc...) asparagine glycan. Asparagine 242, asparagine 265, asparagine 291, asparagine 326, asparagine 370, asparagine 380, asparagine 408, asparagine 453, asparagine 466, asparagine 505, asparagine 517, asparagine 532, asparagine 607, asparagine 611, asparagine 630, asparagine 648, and asparagine 655 each carry an N-linked (GlcNAc...) asparagine glycan. Cysteines 243 and 302 form a disulfide. Cysteine 444 and cysteine 524 are joined by a disulfide. Cysteine 565 and cysteine 618 form a disulfide bridge. The cysteines at positions 664 and 712 are disulfide-linked. A helical membrane pass occupies residues 741-761; that stretch reads IILVSTGAAATFLWIMLILFI. At 762 to 1302 the chain is on the cytoplasmic side; it reads RKLRKPSSAD…YVVRYSTPPV (541 aa). A Protein kinase domain is found at 809 to 1139; sequence LRLGKTLGHG…ELVERLGDLL (331 aa). ATP is bound by residues 815–823 and lysine 843; that span reads LGHGAFGKV. Aspartate 1003 acts as the Proton acceptor in catalysis. Phosphotyrosine; by autocatalysis is present on residues tyrosine 1029, tyrosine 1034, and tyrosine 1150. Disordered regions lie at residues 1159-1179 and 1266-1292; these read TKADPSNQSPTEETSTRPVSL and PLVPSLSLEDSSLDSEMECHSPPPDYN. Over residues 1162 to 1176 the composition is skewed to polar residues; the sequence is DPSNQSPTEETSTRP.

Belongs to the protein kinase superfamily. Tyr protein kinase family. CSF-1/PDGF receptor subfamily. As to quaternary structure, interacts with isoform VEGF165 of vegfaa and isoform VEGF171 of vegfab. Post-translationally, phosphorylated and activated by vegfaa and vegfab. First expressed in embryos between 5- and 7-somites. At 7 somites, expressed in discrete bilateral stripes both anteriorly and posteriorly, and in a transverse ectodermal stripe in the hindbrain. From 7-somites, expression seems to extend caudally from the head, and in both directions in the trunk region, until by 20-somites, expression is detected as a continuous band from the anterior head region to the tailbud. Concurrently, cells expressing kdrl in the mid- and posterior trunk regions converge medially. By 24 hours post-fertilization (hpf), expressed in all the endothelial cells lining the vasculature.

It localises to the cell membrane. The enzyme catalyses L-tyrosyl-[protein] + ATP = O-phospho-L-tyrosyl-[protein] + ADP + H(+). Receptor for VEGF or VEGFC. Has a tyrosine-protein kinase activity. Combinations of multiple VEGF receptors are required for development of different blood vessel types in the embryo. Involved in angiogenesis, specifically in VEGF-induced sprouting of new blood vessels. Particularly involved in artery formation. Does not appear to be required for hematopoiesis. The polypeptide is Vascular endothelial growth factor receptor kdr-like (kdrl) (Danio rerio (Zebrafish)).